A 247-amino-acid chain; its full sequence is Geranylgeranylglyceryl phosphate synthase (247 aa).

The Mg(2+) site is built by Asp-23 and Ser-52. Sn-glycerol 1-phosphate contacts are provided by residues Tyr-171–Gly-177, Gly-203–Gly-204, and Gly-225–Thr-226.

It belongs to the GGGP/HepGP synthase family. Group II subfamily. The cofactor is Mg(2+).

The protein resides in the cytoplasm. The catalysed reaction is sn-glycerol 1-phosphate + (2E,6E,10E)-geranylgeranyl diphosphate = sn-3-O-(geranylgeranyl)glycerol 1-phosphate + diphosphate. The protein operates within membrane lipid metabolism; glycerophospholipid metabolism. Prenyltransferase that catalyzes the transfer of the geranylgeranyl moiety of geranylgeranyl diphosphate (GGPP) to the C3 hydroxyl of sn-glycerol-1-phosphate (G1P). This reaction is the first ether-bond-formation step in the biosynthesis of archaeal membrane lipids. The sequence is that of Geranylgeranylglyceryl phosphate synthase from Methanosarcina mazei (strain ATCC BAA-159 / DSM 3647 / Goe1 / Go1 / JCM 11833 / OCM 88) (Methanosarcina frisia).